A 470-amino-acid polypeptide reads, in one-letter code: Growth/differentiation factor 6 (470 aa).

An N-terminal signal peptide occupies residues 1–22; sequence MDTSRVLLSAVFLISFLWDLPG. Positions 23–350 are excised as a propeptide; it reads FQQASISSSS…SPSPGRRRRR (328 aa). The tract at residues 28 to 98 is disordered; it reads ISSSSSSAEL…REPPGRGPRV (71 aa). The segment covering 45–80 has biased composition (basic and acidic residues); that stretch reads SRKEGRMPRAPRENATAREPLDRQEPPPRPQEEPQR. An N-linked (GlcNAc...) asparagine glycan is attached at N120. 2 disordered regions span residues 247 to 272 and 308 to 366; these read PGAA…SLGF and TEVV…KKSR. Positions 321-333 are enriched in pro residues; sequence GPPPPPPPPPPSG. Residues 345-366 show a composition bias toward basic residues; sequence GRRRRRTAFASRHGKRHGKKSR. 3 cysteine pairs are disulfide-bonded: C369–C435, C398–C467, and C402–C469.

This sequence belongs to the TGF-beta family. As to quaternary structure, homodimer; disulfide-linked.

The protein localises to the secreted. Growth factor that controls proliferation and cellular differentiation in the retina and bone formation. Plays a key role in regulating apoptosis during retinal development. Establishes dorsal-ventral positional information in the retina and controls the formation of the retinotectal map. Required for normal formation of bones and joints in the limbs, skull, digits and axial skeleton. Plays a key role in establishing boundaries between skeletal elements during development. Regulation of GDF6 expression seems to be a mechanism for evolving species-specific changes in skeletal structures. Seems to positively regulate differentiation of chondrogenic tissue through the growth factor receptors subunits BMPR1A, BMPR1B, BMPR2 and ACVR2A, leading to the activation of SMAD1-SMAD5-SMAD8 complex. The regulation of chondrogenic differentiation is inhibited by NOG. Also involved in the induction of adipogenesis from mesenchymal stem cells. This mechanism acts through the growth factor receptors subunits BMPR1A, BMPR2 and ACVR2A and the activation of SMAD1-SMAD5-SMAD8 complex and MAPK14/p38. The polypeptide is Growth/differentiation factor 6 (GDF6) (Bos taurus (Bovine)).